Here is a 1117-residue protein sequence, read N- to C-terminus: Cytospin-A (1117 aa).

Disordered regions lie at residues 1 to 176, 293 to 323, and 358 to 390; these read MKKA…NQIS, SLSPEITPGNQSDGGGTLTSSVEGSAPGSVE, and SSDDALDAPSSSESEGIPSIERSRKGSSGNASE. Over residues 45 to 90 the composition is skewed to low complexity; sequence TAASLSKTKSSDDLLAGMAGGVTVTNGVKGKKSTCPSAAPSASAPA. The segment covering 93 to 117 has biased composition (polar residues); the sequence is TVENKSKISTGTASSTKRSTSTGNK. Composition is skewed to basic and acidic residues over residues 120-131 and 158-171; these read SSTRERLRERTR and TATECDVRMSKSKS. A coiled-coil region spans residues 168–280; the sequence is KSKSDNQISD…LNALGFSLEQ (113 aa). The span at 293 to 303 shows a compositional bias: polar residues; the sequence is SLSPEITPGNQ. A compositionally biased stretch (low complexity) spans 358 to 377; the sequence is SSDDALDAPSSSESEGIPSI. A phosphoserine mark is found at Ser-384, Ser-385, and Ser-389. 2 coiled-coil regions span residues 394-449 and 487-807; these read ACLT…MESL and RYME…RGRV. 3 positions are modified to phosphoserine: Ser-868, Ser-881, and Ser-887. The disordered stretch occupies residues 920-997; sequence TSSASRPASL…PTTRSRIREE (78 aa). Residues 946–956 show a composition bias toward basic and acidic residues; sequence RSSEEVKRDIS. The segment covering 971–990 has biased composition (low complexity); it reads TTSPQLSLSSSPTASVTPTT. The 106-residue stretch at 1011-1116 folds into the Calponin-homology (CH) domain; that stretch reads GSKRNALLKW…YVTAIYKYFE (106 aa).

This sequence belongs to the cytospin-A family. As to quaternary structure, may interact with both microtubules and actin cytoskeleton.

It is found in the cytoplasm. It localises to the cytoskeleton. Its subcellular location is the spindle. The protein resides in the cell junction. The protein localises to the gap junction. Involved in cytokinesis and spindle organization. May play a role in actin cytoskeleton organization and microtubule stabilization and hence required for proper cell adhesion and migration. This is Cytospin-A (SPECC1L) from Homo sapiens (Human).